The chain runs to 665 residues: DNA ligase (665 aa).

NAD(+) contacts are provided by residues 31-35 (DQEFD), 80-81 (SL), and E110. Catalysis depends on K112, which acts as the N6-AMP-lysine intermediate. The NAD(+) site is built by R133, E170, K285, and K309. Positions 403, 406, 421, and 427 each coordinate Zn(2+). The region spanning 587 to 665 (EHTDKLAGKS…SEEEFLQMIE (79 aa)) is the BRCT domain.

The protein belongs to the NAD-dependent DNA ligase family. LigA subfamily. Mg(2+) serves as cofactor. Mn(2+) is required as a cofactor.

The enzyme catalyses NAD(+) + (deoxyribonucleotide)n-3'-hydroxyl + 5'-phospho-(deoxyribonucleotide)m = (deoxyribonucleotide)n+m + AMP + beta-nicotinamide D-nucleotide.. DNA ligase that catalyzes the formation of phosphodiester linkages between 5'-phosphoryl and 3'-hydroxyl groups in double-stranded DNA using NAD as a coenzyme and as the energy source for the reaction. It is essential for DNA replication and repair of damaged DNA. This Phocaeicola vulgatus (strain ATCC 8482 / DSM 1447 / JCM 5826 / CCUG 4940 / NBRC 14291 / NCTC 11154) (Bacteroides vulgatus) protein is DNA ligase.